The primary structure comprises 631 residues: Nucleoside triphosphatase I (631 aa).

Positions Phe-42–Gly-204 constitute a Helicase ATP-binding domain. His-55–Thr-62 is an ATP binding site. The DEXH box signature appears at Asp-141–His-144. In terms of domain architecture, Helicase C-terminal spans Lys-367–Lys-532. A binding to the cap-specific mRNA (nucleoside-2'-O-)-methyltransferase region spans residues Asp-457–Phe-524.

This sequence belongs to the helicase family. NPH I subfamily. In terms of assembly, monomer. Interacts (via C-terminus) with RAP94/OPG109 (via N-terminus). Interacts with the cap-specific mRNA (nucleoside-2'-O-)-methyltransferase OPG102.

The protein resides in the virion. The catalysed reaction is a ribonucleoside 5'-triphosphate + H2O = a ribonucleoside 5'-diphosphate + phosphate + H(+). In terms of biological role, DNA-dependent ATPase that acts as a 5' to 3' translocase on single-stranded DNA and thereby plays a role in transcription termination of viral early genes. Uses forward translocation in concert with the viral RNA polymerase RAP94/OPG109 subunit and the capping enzyme/VTF to catalyze release of UUUUUNU-containing nascent RNA from the elongation complex. In addition, acts as a positive elongation factor to assist transcription through problematic sequences. The protein is Nucleoside triphosphatase I (OPG123) of Vaccinia virus (strain Copenhagen) (VACV).